The following is a 521-amino-acid chain: Outer membrane protein assembly factor BamB (521 aa).

An N-terminal signal peptide occupies residues 1-19; sequence MKKLFLVIVPLLLSLLATS. The N-palmitoyl cysteine moiety is linked to residue cysteine 20. Cysteine 20 carries S-diacylglycerol cysteine lipidation. The interval 418–521 is disordered; that stretch reads KSGSIESSPK…IGDFSKGDSD (104 aa). A compositionally biased stretch (basic and acidic residues) spans 429 to 444; that stretch reads LPDKKVDSNKTSKNDT. Over residues 445-477 the composition is skewed to polar residues; it reads DSNPATTATSTKDIQNPANQEMINSTPVSNTST.

This sequence belongs to the BamB family. Part of the Bam complex.

It is found in the cell outer membrane. In terms of biological role, part of the outer membrane protein assembly complex, which is involved in assembly and insertion of beta-barrel proteins into the outer membrane. This chain is Outer membrane protein assembly factor BamB, found in Francisella salina.